The following is a 296-amino-acid chain: 3-methyl-2-oxobutanoate hydroxymethyltransferase (296 aa).

The interval Met1–Arg33 is disordered. A compositionally biased stretch (low complexity) spans Asp16–Pro25. 2 residues coordinate Mg(2+): Asp77 and Asp116. 3-methyl-2-oxobutanoate contacts are provided by residues Asp77–Ser78, Asp116, and Lys146. Residue Glu148 participates in Mg(2+) binding. Glu214 functions as the Proton acceptor in the catalytic mechanism.

This sequence belongs to the PanB family. As to quaternary structure, homodecamer; pentamer of dimers. The cofactor is Mg(2+).

It localises to the cytoplasm. It catalyses the reaction 3-methyl-2-oxobutanoate + (6R)-5,10-methylene-5,6,7,8-tetrahydrofolate + H2O = 2-dehydropantoate + (6S)-5,6,7,8-tetrahydrofolate. It functions in the pathway cofactor biosynthesis; (R)-pantothenate biosynthesis; (R)-pantoate from 3-methyl-2-oxobutanoate: step 1/2. Functionally, catalyzes the reversible reaction in which hydroxymethyl group from 5,10-methylenetetrahydrofolate is transferred onto alpha-ketoisovalerate to form ketopantoate. The protein is 3-methyl-2-oxobutanoate hydroxymethyltransferase of Frankia casuarinae (strain DSM 45818 / CECT 9043 / HFP020203 / CcI3).